Consider the following 80-residue polypeptide: Exodeoxyribonuclease 7 small subunit (80 aa).

It belongs to the XseB family. Heterooligomer composed of large and small subunits.

The protein localises to the cytoplasm. The enzyme catalyses Exonucleolytic cleavage in either 5'- to 3'- or 3'- to 5'-direction to yield nucleoside 5'-phosphates.. Bidirectionally degrades single-stranded DNA into large acid-insoluble oligonucleotides, which are then degraded further into small acid-soluble oligonucleotides. This Vibrio cholerae serotype O1 (strain ATCC 39541 / Classical Ogawa 395 / O395) protein is Exodeoxyribonuclease 7 small subunit.